The primary structure comprises 252 residues: N-glycosylase/DNA lyase (252 aa).

Residues Q32, S60, and W71 each coordinate 8-oxoguanine. The helix-hairpin-helix stretch occupies residues 129-193 (KTYYSDMEKL…KDSRIEKYTL (65 aa)). K153 functions as the Schiff-base intermediate with DNA in the catalytic mechanism. 8-oxoguanine contacts are provided by F157 and P183. D185 is a catalytic residue. Residues D219 and W223 each coordinate 8-oxoguanine.

It belongs to the archaeal N-glycosylase/DNA lyase (AGOG) family.

It carries out the reaction 2'-deoxyribonucleotide-(2'-deoxyribose 5'-phosphate)-2'-deoxyribonucleotide-DNA = a 3'-end 2'-deoxyribonucleotide-(2,3-dehydro-2,3-deoxyribose 5'-phosphate)-DNA + a 5'-end 5'-phospho-2'-deoxyribonucleoside-DNA + H(+). Functionally, DNA repair enzyme that is part of the base excision repair (BER) pathway; protects from oxidative damage by removing the major product of DNA oxidation, 8-oxoguanine (GO), from single- and double-stranded DNA substrates. In Methanococcus maripaludis (strain DSM 14266 / JCM 13030 / NBRC 101832 / S2 / LL), this protein is N-glycosylase/DNA lyase.